The primary structure comprises 316 residues: Olfactory receptor 10A7 (316 aa).

Over M1–V25 the chain is Extracellular. An N-linked (GlcNAc...) asparagine glycan is attached at N5. The chain crosses the membrane as a helical span at residues S26–V46. The Cytoplasmic segment spans residues T47–A54. Residues L55–L75 form a helical membrane-spanning segment. Topologically, residues V76–T99 are extracellular. Residues Q100–Y120 form a helical membrane-spanning segment. The Cytoplasmic portion of the chain corresponds to D121 to S139. Residues L140 to T160 form a helical membrane-spanning segment. The Extracellular segment spans residues A161–M197. The helical transmembrane segment at Q198–S217 threads the bilayer. The Cytoplasmic segment spans residues Y218–A237. A helical membrane pass occupies residues F238–T258. Residues Y259–K271 lie on the Extracellular side of the membrane. The helical transmembrane segment at K272 to L292 threads the bilayer. The Cytoplasmic segment spans residues R293–F316.

It belongs to the G-protein coupled receptor 1 family.

Its subcellular location is the cell membrane. Functionally, odorant receptor. This chain is Olfactory receptor 10A7 (OR10A7), found in Homo sapiens (Human).